The following is an 828-amino-acid chain: Isethionate sulfite-lyase (828 aa).

Residues 30–698 (ERVFTILESF…VVSATPNGRK (669 aa)) enclose the PFL domain. 2-hydroxyethane-1-sulfonate-binding positions include Arg187, Gln191, 466 to 468 (CTE), and Arg676. Cys466 acts as the Cysteine radical intermediate in catalysis. The active-site Proton acceptor is Glu468. The Glycine radical domain maps to 705-828 (DGSSASHGAD…LIARTGHDVM (124 aa)). At Gly803 the chain carries Glycine radical.

This sequence belongs to the glycyl radical enzyme (GRE) family. Homodimer. Post-translationally, requires the activating protein IseH to generate the key active site glycyl radical on Gly-803 that is involved in catalysis.

It catalyses the reaction 2-hydroxyethane-1-sulfonate = acetaldehyde + sulfite + H(+). It functions in the pathway organosulfur degradation; alkanesulfonate degradation. Functionally, involved in an anaerobic respiration pathway that converts the sulfonate isethionate (2-hydroxyethanesulfonate) to ammonia, acetate and sulfide. Catalyzes the radical-mediated C-S bond cleavage of isethionate (2-hydroxyethanesulfonate) to form sulfite and acetaldehyde. Shows no activity with taurine or ethanolamine as substrates. In Nitratidesulfovibrio vulgaris (strain ATCC 29579 / DSM 644 / CCUG 34227 / NCIMB 8303 / VKM B-1760 / Hildenborough) (Desulfovibrio vulgaris), this protein is Isethionate sulfite-lyase.